Consider the following 264-residue polypeptide: Cyclin-P1-1 (264 aa).

Positions 1 to 25 (MDAAAAAGGEMSRQKATASAPPPPE) are disordered.

It belongs to the cyclin family. Cyclin U/P subfamily.

This is Cyclin-P1-1 (CYCP1-1) from Oryza sativa subsp. japonica (Rice).